The following is a 535-amino-acid chain: Dimethylaniline monooxygenase [N-oxide-forming] 2 (535 aa).

An N-acetylalanine modification is found at A2. FAD is bound by residues 9 to 13 (GAGVS), E32, 40 to 41 (LW), and 61 to 62 (NT). NADP(+) is bound by residues 60-61 (TN) and 195-198 (SASD). Residue K492 forms a Glycyl lysine isopeptide (Lys-Gly) (interchain with G-Cter in SUMO) linkage. Residues 510 to 530 (LSASFLMKILALVAVFVAFFS) form a helical membrane-spanning segment.

Belongs to the FMO family. The cofactor is FAD. Mg(2+) is required as a cofactor. In terms of tissue distribution, lung.

It is found in the microsome membrane. The protein resides in the endoplasmic reticulum membrane. Catalyzes the oxidative metabolism of numerous xenobiotics, including mainly therapeutic drugs and insecticides that contain a soft nucleophile, most commonly nitrogen and sulfur and participates to their bioactivation. This is Dimethylaniline monooxygenase [N-oxide-forming] 2 from Cavia porcellus (Guinea pig).